A 53-amino-acid chain; its full sequence is ATP synthase protein 8 (53 aa).

A helical membrane pass occupies residues 6 to 26 (PIGWLSLFIIFSLTFILFSMM).

It belongs to the ATPase protein 8 family. F-type ATPases have 2 components, CF(1) - the catalytic core - and CF(0) - the membrane proton channel.

The protein resides in the mitochondrion membrane. Functionally, mitochondrial membrane ATP synthase (F(1)F(0) ATP synthase or Complex V) produces ATP from ADP in the presence of a proton gradient across the membrane which is generated by electron transport complexes of the respiratory chain. F-type ATPases consist of two structural domains, F(1) - containing the extramembraneous catalytic core and F(0) - containing the membrane proton channel, linked together by a central stalk and a peripheral stalk. During catalysis, ATP synthesis in the catalytic domain of F(1) is coupled via a rotary mechanism of the central stalk subunits to proton translocation. Part of the complex F(0) domain. Minor subunit located with subunit a in the membrane. The protein is ATP synthase protein 8 (mt:ATPase8) of Ceratitis capitata (Mediterranean fruit fly).